The following is a 379-amino-acid chain: Succinyl-diaminopimelate desuccinylase (379 aa).

Zn(2+) is bound at residue His70. Asp72 is a catalytic residue. Asp103 is a binding site for Zn(2+). Catalysis depends on Glu137, which acts as the Proton acceptor. Residues Glu138, Glu166, and His352 each coordinate Zn(2+).

This sequence belongs to the peptidase M20A family. DapE subfamily. In terms of assembly, homodimer. Zn(2+) is required as a cofactor. The cofactor is Co(2+).

It catalyses the reaction N-succinyl-(2S,6S)-2,6-diaminopimelate + H2O = (2S,6S)-2,6-diaminopimelate + succinate. The protein operates within amino-acid biosynthesis; L-lysine biosynthesis via DAP pathway; LL-2,6-diaminopimelate from (S)-tetrahydrodipicolinate (succinylase route): step 3/3. Catalyzes the hydrolysis of N-succinyl-L,L-diaminopimelic acid (SDAP), forming succinate and LL-2,6-diaminopimelate (DAP), an intermediate involved in the bacterial biosynthesis of lysine and meso-diaminopimelic acid, an essential component of bacterial cell walls. The polypeptide is Succinyl-diaminopimelate desuccinylase (Burkholderia ambifaria (strain MC40-6)).